We begin with the raw amino-acid sequence, 216 residues long: Elongation factor Ts (216 aa).

An involved in Mg(2+) ion dislocation from EF-Tu region spans residues 80–83; sequence TDFV.

This sequence belongs to the EF-Ts family.

It localises to the cytoplasm. In terms of biological role, associates with the EF-Tu.GDP complex and induces the exchange of GDP to GTP. It remains bound to the aminoacyl-tRNA.EF-Tu.GTP complex up to the GTP hydrolysis stage on the ribosome. The sequence is that of Elongation factor Ts from Alkaliphilus oremlandii (strain OhILAs) (Clostridium oremlandii (strain OhILAs)).